The following is a 222-amino-acid chain: Bone marrow proteoglycan (222 aa).

Positions 1–16 are cleaved as a signal peptide; the sequence is MKLPLLLALLFGAVSA. A propeptide spans 17–105 (acidic); it reads LHLRSETSTF…VKVVGIPGCQ (89 aa). O-linked (GalNAc...) threonine; partial glycosylation occurs at T23. The O-linked (GalNAc...) serine glycan is linked to S24. T25 is a glycosylation site (O-linked (GalNAc...) threonine). A disordered region spans residues 25-75; it reads TFETPLGAKTLPEDEETPEQEMEETPCRELEEEEEWGSGSEDASKKDGAVE. O-linked (GalNAc...) threonine; partial glycosylation occurs at T34. The segment covering 37-60 has biased composition (acidic residues); that stretch reads EDEETPEQEMEETPCRELEEEEEW. An O-linked (Xyl...) (chondroitin sulfate) serine glycan is attached at S62. The N-linked (GlcNAc...) asparagine glycan is linked to N86. The 119-residue stretch at 104 to 222 folds into the C-type lectin domain; it reads CQTCRYLLVR…LRRLPFICSY (119 aa). 2 cysteine pairs are disulfide-bonded: C125–C220 and C197–C212.

In terms of assembly, in pregnancy serum, the proform exists as a disulfide-linked 2:2 heterotetramer with PAPPA, as a disulfide-linked 2:2 heterotetramer with AGT, and as a complex (probably a 2:2:2 heterohexamer) with AGT and C3dg. Post-translationally, nitrated. As to expression, detected in plasma and urine (at protein level). Detected in placenta (at protein level). High levels of the proform in placenta and pregnancy serum; in placenta, localized to X cells of septa and anchoring villi. Lower levels in a variety of other tissues including kidney, myometrium, endometrium, ovaries, breast, prostate, bone marrow and colon.

The protein resides in the secreted. It is found in the cytoplasmic vesicle. The protein localises to the secretory vesicle. Functionally, cytotoxin and helminthotoxin. Also induces non-cytolytic histamine release from human basophils. Involved in antiparasitic defense mechanisms and immune hypersensitivity reactions. The proform acts as a proteinase inhibitor, reducing the activity of PAPPA. The sequence is that of Bone marrow proteoglycan (PRG2) from Homo sapiens (Human).